A 1380-amino-acid chain; its full sequence is Receptor-type adenylate cyclase A (1380 aa).

At 1 to 34 (MAMQIRPSLGGCLRHGGAGDHAARRLSRLRAAKV) the chain is on the cytoplasmic side. A helical transmembrane segment spans residues 35 to 55 (FVPTAVVCVLLCCAPWVMAEI). At 56–891 (TNDAEREPVY…SHALTPAQRN (836 aa)) the chain is on the extracellular side. 4 N-linked (GlcNAc...) asparagine glycosylation sites follow: Asn422, Asn478, Asn497, and Asn567. Residues 892–912 (GLIAGCVVGAVVLIATCTLLL) traverse the membrane as a helical segment. Topologically, residues 913-1380 (YCCMDNRNND…NPHYARHAFE (468 aa)) are cytoplasmic. Residues 933–1087 (TLLFTDIESS…DTSNMAARTE (155 aa)) form the Guanylate cyclase domain. Residues Asp938 and Asp981 each contribute to the Mg(2+) site. A disordered region spans residues 1270 to 1298 (LAREGDSAAGGVRPRLPGSPVTSLPAGGS).

This sequence belongs to the adenylyl cyclase class-3 family. The cofactor is Mg(2+).

The protein localises to the membrane. It carries out the reaction ATP = 3',5'-cyclic AMP + diphosphate. In terms of biological role, could act as a receptor for an unknown ligand. This Leishmania donovani protein is Receptor-type adenylate cyclase A (RAC-A).